The primary structure comprises 235 residues: Phosphoribosylaminoimidazole-succinocarboxamide synthase (235 aa).

The protein belongs to the SAICAR synthetase family.

It catalyses the reaction 5-amino-1-(5-phospho-D-ribosyl)imidazole-4-carboxylate + L-aspartate + ATP = (2S)-2-[5-amino-1-(5-phospho-beta-D-ribosyl)imidazole-4-carboxamido]succinate + ADP + phosphate + 2 H(+). It functions in the pathway purine metabolism; IMP biosynthesis via de novo pathway; 5-amino-1-(5-phospho-D-ribosyl)imidazole-4-carboxamide from 5-amino-1-(5-phospho-D-ribosyl)imidazole-4-carboxylate: step 1/2. This is Phosphoribosylaminoimidazole-succinocarboxamide synthase from Thermococcus kodakarensis (strain ATCC BAA-918 / JCM 12380 / KOD1) (Pyrococcus kodakaraensis (strain KOD1)).